Here is a 385-residue protein sequence, read N- to C-terminus: 3,5,7-trioxododecanoyl-CoA synthase (385 aa).

Cys157 is an active-site residue.

Belongs to the thiolase-like superfamily. Chalcone/stilbene synthases family. Expressed in bracts, flowers and young leaves. Not detected in mature leaves, roots and stems. Expressed in glandular trichomes.

The enzyme catalyses hexanoyl-CoA + 3 malonyl-CoA + 3 H(+) = 3,5,7-trioxododecanoyl-CoA + 3 CO2 + 3 CoA. It catalyses the reaction 3,5,7-trioxododecanoyl-CoA = olivetol + CO2 + CoA. The protein operates within secondary metabolite biosynthesis; terpenoid biosynthesis. Its function is as follows. Involved in the biosynthesis of cannabinoids-related terpenophenolic natural products, which have pharmacological activity. Polyketide synthase responsible for olivetol biosynthesis, from a C(12)-polyketide, probably 3,5,7-trioxododecanoyl-CoA. Catalyzes the first step in the cannabinoids biosynthetic pathway. The preferred substrate is hexanoyl-CoA, but also accepts CoA esters with C4 to C8 aliphatic side chains. When using malonyl-CoA and hexanoyl-CoA as substrates, produces undetermined compounds distinct form olivetol or olivetolic acid that could be hexanoyl triacetic acid lactone (HTAL) and pentyl diacetic acid lactone (PDAL). Produces olivetolic acid when acting in concert with olivetolic acid cyclase (OAC). This Cannabis sativa (Hemp) protein is 3,5,7-trioxododecanoyl-CoA synthase.